Reading from the N-terminus, the 432-residue chain is UDP-N-acetylmuramate--L-alanine ligase (432 aa).

109–115 provides a ligand contact to ATP; the sequence is GAHGKST.

It belongs to the MurCDEF family.

It is found in the cytoplasm. It catalyses the reaction UDP-N-acetyl-alpha-D-muramate + L-alanine + ATP = UDP-N-acetyl-alpha-D-muramoyl-L-alanine + ADP + phosphate + H(+). It participates in cell wall biogenesis; peptidoglycan biosynthesis. Functionally, cell wall formation. In Campylobacter jejuni subsp. jejuni serotype O:2 (strain ATCC 700819 / NCTC 11168), this protein is UDP-N-acetylmuramate--L-alanine ligase.